A 433-amino-acid polypeptide reads, in one-letter code: D-amino acid dehydrogenase (433 aa).

Residue 3–17 (VLVLGSGVIGTTSAY) participates in FAD binding.

It belongs to the DadA oxidoreductase family. FAD is required as a cofactor.

It carries out the reaction a D-alpha-amino acid + A + H2O = a 2-oxocarboxylate + AH2 + NH4(+). The protein operates within amino-acid degradation; D-alanine degradation; NH(3) and pyruvate from D-alanine: step 1/1. Oxidative deamination of D-amino acids. The chain is D-amino acid dehydrogenase from Pseudomonas savastanoi pv. phaseolicola (strain 1448A / Race 6) (Pseudomonas syringae pv. phaseolicola (strain 1448A / Race 6)).